The following is a 245-amino-acid chain: 3-deoxy-manno-octulosonate cytidylyltransferase (245 aa).

It belongs to the KdsB family.

The protein resides in the cytoplasm. The enzyme catalyses 3-deoxy-alpha-D-manno-oct-2-ulosonate + CTP = CMP-3-deoxy-beta-D-manno-octulosonate + diphosphate. Its pathway is nucleotide-sugar biosynthesis; CMP-3-deoxy-D-manno-octulosonate biosynthesis; CMP-3-deoxy-D-manno-octulosonate from 3-deoxy-D-manno-octulosonate and CTP: step 1/1. It functions in the pathway bacterial outer membrane biogenesis; lipopolysaccharide biosynthesis. Activates KDO (a required 8-carbon sugar) for incorporation into bacterial lipopolysaccharide in Gram-negative bacteria. In Acidobacterium capsulatum (strain ATCC 51196 / DSM 11244 / BCRC 80197 / JCM 7670 / NBRC 15755 / NCIMB 13165 / 161), this protein is 3-deoxy-manno-octulosonate cytidylyltransferase.